The chain runs to 1381 residues: DNA-directed RNA polymerase subunit beta'' (1381 aa).

Residues cysteine 224, cysteine 295, cysteine 302, and cysteine 305 each coordinate Zn(2+).

It belongs to the RNA polymerase beta' chain family. RpoC2 subfamily. In terms of assembly, in plastids the minimal PEP RNA polymerase catalytic core is composed of four subunits: alpha, beta, beta', and beta''. When a (nuclear-encoded) sigma factor is associated with the core the holoenzyme is formed, which can initiate transcription. It depends on Zn(2+) as a cofactor.

The protein localises to the plastid. Its subcellular location is the chloroplast. The catalysed reaction is RNA(n) + a ribonucleoside 5'-triphosphate = RNA(n+1) + diphosphate. Its function is as follows. DNA-dependent RNA polymerase catalyzes the transcription of DNA into RNA using the four ribonucleoside triphosphates as substrates. This is DNA-directed RNA polymerase subunit beta'' from Guizotia abyssinica (Niger).